Reading from the N-terminus, the 126-residue chain is Large ribosomal subunit protein uL14 (126 aa).

The protein belongs to the universal ribosomal protein uL14 family. As to quaternary structure, part of the 50S ribosomal subunit. Forms a cluster with proteins L3 and L19. In the 70S ribosome, L14 and L19 interact and together make contacts with the 16S rRNA in bridges B5 and B8.

In terms of biological role, binds to 23S rRNA. Forms part of two intersubunit bridges in the 70S ribosome. This chain is Large ribosomal subunit protein uL14, found in Persephonella marina (strain DSM 14350 / EX-H1).